The chain runs to 193 residues: Ion-translocating oxidoreductase complex subunit A (193 aa).

The next 6 helical transmembrane spans lie at 5-25 (FLLFVGTVLVNNFVLVKFLGL), 39-59 (IGMGFATTFVMTLASVCSWLV), 62-82 (FILLPLDLIYLRTLSFILVIA), 102-122 (LLGIFLPLITTNCAVLGVALL), 134-154 (AIYGFGAAAGFSLVMVLFAAI), and 171-191 (SIGLITAGLMSLAFMGFSGLV).

This sequence belongs to the NqrDE/RnfAE family. As to quaternary structure, the complex is composed of six subunits: RnfA, RnfB, RnfC, RnfD, RnfE and RnfG.

The protein localises to the cell inner membrane. Part of a membrane-bound complex that couples electron transfer with translocation of ions across the membrane. This chain is Ion-translocating oxidoreductase complex subunit A, found in Photorhabdus laumondii subsp. laumondii (strain DSM 15139 / CIP 105565 / TT01) (Photorhabdus luminescens subsp. laumondii).